A 451-amino-acid polypeptide reads, in one-letter code: Phosphoglucosamine mutase (451 aa).

Ser107 functions as the Phosphoserine intermediate in the catalytic mechanism. The Mg(2+) site is built by Ser107, Asp246, Asp248, and Asp250. The residue at position 107 (Ser107) is a Phosphoserine.

It belongs to the phosphohexose mutase family. It depends on Mg(2+) as a cofactor. In terms of processing, activated by phosphorylation.

The enzyme catalyses alpha-D-glucosamine 1-phosphate = D-glucosamine 6-phosphate. In terms of biological role, catalyzes the conversion of glucosamine-6-phosphate to glucosamine-1-phosphate. In Burkholderia ambifaria (strain ATCC BAA-244 / DSM 16087 / CCUG 44356 / LMG 19182 / AMMD) (Burkholderia cepacia (strain AMMD)), this protein is Phosphoglucosamine mutase.